Consider the following 457-residue polypeptide: 1-carboxybiuret hydrolase subunit AtzE (457 aa).

Catalysis depends on charge relay system residues K74 and S150. Residue S174 is the Acyl-ester intermediate of the active site.

The protein belongs to the amidase family. As to quaternary structure, heterotetramer consisting of 2 AtzE and 2 AtzG subunits.

It carries out the reaction 1-carboxybiuret + H2O = urea-1,3-dicarboxylate + NH4(+). Its pathway is xenobiotic degradation; atrazine degradation. In terms of biological role, hydrolyzes 1-carboxybiuret to urea-1,3-dicarboxylate and NH(3). The sequence is that of 1-carboxybiuret hydrolase subunit AtzE from Pseudomonas sp. (strain ADP).